The chain runs to 387 residues: Omega-6 fatty acid desaturase, endoplasmic reticulum isozyme 1 (387 aa).

Helical transmembrane passes span 54 to 74 (LLTS…FYIA) and 87 to 107 (LIAW…VWVI). Residues 109-113 (HECGH) carry the Histidine box-1 motif. The helical transmembrane segment at 121–141 (WVDDVVGLTLHSTLLVPYFSW) threads the bilayer. Residues 145-149 (HRRHH) carry the Histidine box-2 motif. 3 consecutive transmembrane segments (helical) span residues 183-203 (AVSL…FNVS), 227-247 (LLIY…YRVA), and 251-271 (GLVW…GFLV). The Histidine box-3 signature appears at 319–323 (HVAHH).

The protein belongs to the fatty acid desaturase type 1 family. In terms of tissue distribution, strongly expressed in developing seeds.

It localises to the endoplasmic reticulum membrane. It functions in the pathway lipid metabolism; polyunsaturated fatty acid biosynthesis. Its function is as follows. ER (microsomal) omega-6 fatty acid desaturase introduces the second double bond in the biosynthesis of 18:3 fatty acids, important constituents of plant membranes. It is thought to use cytochrome b5 as an electron donor and to act on fatty acids esterified to phosphatidylcholine and, possibly, other phospholipids. The sequence is that of Omega-6 fatty acid desaturase, endoplasmic reticulum isozyme 1 (FAD2-1) from Glycine max (Soybean).